The following is a 465-amino-acid chain: MSEAVPTSARKSRNAPVAPGPAPVLEIESLDMEARGVGRTITEDGEPGKVIFVEGALPGERVTYSSFRRKPSYEQATVVDILRPSVMRTKPKCAFFGTCGGCSMQHLDMRAQVAVKQRVLEDNLWHLAKLRAETMFAPIHGPSWGYRYRARLTVRNVAKKGGVLVGFHEKKSSYVADMTSCEVLPPHVSAMLVPLRRLVEGLSIRDRMPQIELAVGSEVTALVLRVLEPINADDEALLRAFADEHKVQFWLQPKGPDTVAPFYPLDVSLDYTLPEFGIRMPFKPTDFTQVNHQINRVLVGRALRLLAPSRDDRVLDLFCGIGNFTLPLARLSREVMGIEGSDTLTTRALANARENGVDGHTTFACRNLFEVTGDDIRALGAFDKFLIDPPREGALAVSKALAEIAQSGEGPLPKRIVYVSCNPSTLARDAGLLVHEAGYRLKGAGVVNMFPNTSHVESIALFERD.

The tract at residues 1 to 22 is disordered; that stretch reads MSEAVPTSARKSRNAPVAPGPA. In terms of domain architecture, TRAM spans 16-80; the sequence is PVAPGPAPVL…PSYEQATVVD (65 aa). The [4Fe-4S] cluster site is built by Cys-93, Cys-99, Cys-102, and Cys-181. S-adenosyl-L-methionine-binding residues include Gln-289, Phe-318, Asn-323, Glu-339, Asn-367, and Asp-388. Cys-421 functions as the Nucleophile in the catalytic mechanism.

Belongs to the class I-like SAM-binding methyltransferase superfamily. RNA M5U methyltransferase family. RlmD subfamily.

The enzyme catalyses uridine(1939) in 23S rRNA + S-adenosyl-L-methionine = 5-methyluridine(1939) in 23S rRNA + S-adenosyl-L-homocysteine + H(+). In terms of biological role, catalyzes the formation of 5-methyl-uridine at position 1939 (m5U1939) in 23S rRNA. The protein is 23S rRNA (uracil(1939)-C(5))-methyltransferase RlmD of Burkholderia lata (strain ATCC 17760 / DSM 23089 / LMG 22485 / NCIMB 9086 / R18194 / 383).